The sequence spans 393 residues: MLQRVILIVLDSVGVGELPDAYKFGDKGTNTLGHVVEKTGIKLPTMEKLGLGNIIPLKTVAPNPNAIGAYGKMAEKSAGKDTTTGHWEIAGLIVEKPFPTYPEGFPKEIIEEFEKRIGRKVLGNKPASGTEIIKELGEEHIKTGYPIVYTSADSVFQIAAHEEVIPLEELYRMCEIAREILKGDHAVGRVIARPFIGSPGNFVRTANRRDFSLKPFGPTVLDMLKEAGYQVYAVGKIEDIFAGQGITDSVHTGNNDEGITATIEAMDAVKKGIIFTNLVDFDMVYGHRNDVNGYAKALKHFDERLPEIMLRLKEEDLLIITADHGCDPTTPGTDHTREYVPLLVYSPSMKEGRNLGLRKTYADVAATIAEIFNVGPIHTGTSFLRELPLKVGV.

Positions 11, 282, 287, 323, 324, and 335 each coordinate Mn(2+).

It belongs to the phosphopentomutase family. The cofactor is Mn(2+).

Its subcellular location is the cytoplasm. The catalysed reaction is 2-deoxy-alpha-D-ribose 1-phosphate = 2-deoxy-D-ribose 5-phosphate. It carries out the reaction alpha-D-ribose 1-phosphate = D-ribose 5-phosphate. It functions in the pathway carbohydrate degradation; 2-deoxy-D-ribose 1-phosphate degradation; D-glyceraldehyde 3-phosphate and acetaldehyde from 2-deoxy-alpha-D-ribose 1-phosphate: step 1/2. Its function is as follows. Isomerase that catalyzes the conversion of deoxy-ribose 1-phosphate (dRib-1-P) and ribose 1-phosphate (Rib-1-P) to deoxy-ribose 5-phosphate (dRib-5-P) and ribose 5-phosphate (Rib-5-P), respectively. The protein is Phosphopentomutase of Caldanaerobacter subterraneus subsp. tengcongensis (strain DSM 15242 / JCM 11007 / NBRC 100824 / MB4) (Thermoanaerobacter tengcongensis).